Reading from the N-terminus, the 885-residue chain is MYRGKRVKLEDETEGSWKSFAAVRMTAVDDISDSTEVVEMEDVPSQFFVEKHSWDGLRDIIHNSRMYSGMVINKAPHDFQFVQKHDESGPHSHRLYYLGMPYGSRENSLLYSEIPKKIRKEALLVLSWKQMLDHFQATPHHGVYSREEELLRERKRLGVFGITSYDYHAQSGLFLFQASNSLFYCRDGGHNGFIQAAPMKPMEIKTQCSGIRMDPKISPGDPSFIAFINNNDLWVTNIETAEERRLTFCHKGLNNVKEDPKSAGVATFVIQEEFDRFTGYWWSPAATEDADGGKTLQLLYEEVDESEVEIIHVPSPALEERKADVYRYPRTGSKNPQISLKLAEIRTDQQGKMISAQNKELVLPFTTLFPGVEYIARAGWTKDGKFAWAVLLDRSQQKLQLVLLPPALFIPVSVDDPQWEEHVEAMPEGVQPFIIYEEITDIWINVHDIFYPFIQTSNDKISFLWVNESQTGFCHLYRITSLLKPGCHQWSREYSPSEDDFKCSTEEEVALTSGEWEVLARHGSKIWVNEETKLVYFQGTKDTPLEHHLYVVSYESPGEIVRLTKPGFSHSCSVSQNFDMFISHYSNVSTPPCVHVYKLTGADSDPLHKEPEFWASMMEATGCRPDYIPPEIFSFPASSGFRLYGMLYKPHNLKPGKKHPTILFVYGGPQVQLVNNSYKGVKYLRLNTLASLGYAVVVIDGRGSCQRGLKFEGALKNKMGQVEIEDQVEGLQFVAEKYKFIDLSRVAIHGWSYGGFLSLMGLIHRPNIFKVAIAGAPVTVWMAYDTGYTERYMDVPENNQQGYEAGSVALHVDKLPNEPNRLLILHGFLDENVHFFHTNFLVSQLIRAGKPYQLQIYPNERHSIRCPESGEHYEIMLLYFLQQHL.

Residues Ser752, Asp830, and His862 each act as charge relay system in the active site. Ser752 contacts Val-boroPro.

This sequence belongs to the peptidase S9B family. DPPIV subfamily. As to quaternary structure, homodimer. Forms a ternary complex with NLRP1, composed of a DPP9 homodimer, one full-length NLRP1 protein, and one cleaved C-terminus of NLRP1 (NACHT, LRR and PYD domains-containing protein 1, C-terminus).

The protein localises to the nucleus. It carries out the reaction Release of an N-terminal dipeptide, Xaa-Yaa-|-Zaa-, from a polypeptide, preferentially when Yaa is Pro, provided Zaa is neither Pro nor hydroxyproline.. In terms of biological role, dipeptidyl peptidase that cleaves off N-terminal dipeptides from proteins having a Pro or Ala residue at position 2. Acts as a key inhibitor of the NLRP1 inflammasome. This chain is Dipeptidyl peptidase 9, found in Danio rerio (Zebrafish).